Here is a 454-residue protein sequence, read N- to C-terminus: Type II methyltransferase M.MvaI (454 aa).

The protein belongs to the N(4)/N(6)-methyltransferase family. N(4) subfamily.

The enzyme catalyses a 2'-deoxycytidine in DNA + S-adenosyl-L-methionine = an N(4)-methyl-2'-deoxycytidine in DNA + S-adenosyl-L-homocysteine + H(+). In terms of biological role, an alpha subtype methylase, recognizes the double-stranded sequence 5'-CCWGG-3', methylatES C-2 on both strands, and protects the DNA from cleavage by the MvaI endonuclease. This Kocuria varians (Micrococcus varians) protein is Type II methyltransferase M.MvaI.